The following is a 688-amino-acid chain: Glycine--tRNA ligase beta subunit (688 aa).

The protein belongs to the class-II aminoacyl-tRNA synthetase family. As to quaternary structure, tetramer of two alpha and two beta subunits.

The protein localises to the cytoplasm. It catalyses the reaction tRNA(Gly) + glycine + ATP = glycyl-tRNA(Gly) + AMP + diphosphate. This is Glycine--tRNA ligase beta subunit from Aliivibrio salmonicida (strain LFI1238) (Vibrio salmonicida (strain LFI1238)).